Here is an 89-residue protein sequence, read N- to C-terminus: Small ribosomal subunit protein uS15 (89 aa).

Belongs to the universal ribosomal protein uS15 family. As to quaternary structure, part of the 30S ribosomal subunit. Forms a bridge to the 50S subunit in the 70S ribosome, contacting the 23S rRNA.

Its function is as follows. One of the primary rRNA binding proteins, it binds directly to 16S rRNA where it helps nucleate assembly of the platform of the 30S subunit by binding and bridging several RNA helices of the 16S rRNA. Functionally, forms an intersubunit bridge (bridge B4) with the 23S rRNA of the 50S subunit in the ribosome. In Vibrio atlanticus (strain LGP32) (Vibrio splendidus (strain Mel32)), this protein is Small ribosomal subunit protein uS15.